The primary structure comprises 156 residues: Small ribosomal subunit protein uS7 (156 aa).

The protein belongs to the universal ribosomal protein uS7 family. Part of the 30S ribosomal subunit. Contacts proteins S9 and S11.

In terms of biological role, one of the primary rRNA binding proteins, it binds directly to 16S rRNA where it nucleates assembly of the head domain of the 30S subunit. Is located at the subunit interface close to the decoding center, probably blocks exit of the E-site tRNA. The chain is Small ribosomal subunit protein uS7 from Leuconostoc citreum (strain KM20).